The chain runs to 178 residues: Small ribosomal subunit protein uS5 (178 aa).

The S5 DRBM domain maps to 17-80 (FEERIVEIRR…AAARASVVEI (64 aa)).

It belongs to the universal ribosomal protein uS5 family. As to quaternary structure, part of the 30S ribosomal subunit. Contacts proteins S4 and S8.

In terms of biological role, with S4 and S12 plays an important role in translational accuracy. Located at the back of the 30S subunit body where it stabilizes the conformation of the head with respect to the body. The protein is Small ribosomal subunit protein uS5 of Pseudothermotoga lettingae (strain ATCC BAA-301 / DSM 14385 / NBRC 107922 / TMO) (Thermotoga lettingae).